A 263-amino-acid chain; its full sequence is Thiazole synthase (263 aa).

K100 (schiff-base intermediate with DXP) is an active-site residue. 1-deoxy-D-xylulose 5-phosphate contacts are provided by residues G161, 188-189 (AG), and 210-211 (NS).

The protein belongs to the ThiG family. In terms of assembly, homotetramer. Forms heterodimers with either ThiH or ThiS.

It localises to the cytoplasm. The enzyme catalyses [ThiS sulfur-carrier protein]-C-terminal-Gly-aminoethanethioate + 2-iminoacetate + 1-deoxy-D-xylulose 5-phosphate = [ThiS sulfur-carrier protein]-C-terminal Gly-Gly + 2-[(2R,5Z)-2-carboxy-4-methylthiazol-5(2H)-ylidene]ethyl phosphate + 2 H2O + H(+). It participates in cofactor biosynthesis; thiamine diphosphate biosynthesis. Catalyzes the rearrangement of 1-deoxy-D-xylulose 5-phosphate (DXP) to produce the thiazole phosphate moiety of thiamine. Sulfur is provided by the thiocarboxylate moiety of the carrier protein ThiS. In vitro, sulfur can be provided by H(2)S. This is Thiazole synthase from Pseudoalteromonas translucida (strain TAC 125).